The following is a 152-amino-acid chain: Deoxyuridine 5'-triphosphate nucleotidohydrolase (152 aa).

Residues 71–73, Asn84, 88–90, and Met98 each bind substrate; these read RSG and LID.

The protein belongs to the dUTPase family. It depends on Mg(2+) as a cofactor.

The enzyme catalyses dUTP + H2O = dUMP + diphosphate + H(+). Its pathway is pyrimidine metabolism; dUMP biosynthesis; dUMP from dCTP (dUTP route): step 2/2. In terms of biological role, this enzyme is involved in nucleotide metabolism: it produces dUMP, the immediate precursor of thymidine nucleotides and it decreases the intracellular concentration of dUTP so that uracil cannot be incorporated into DNA. This Cronobacter sakazakii (strain ATCC BAA-894) (Enterobacter sakazakii) protein is Deoxyuridine 5'-triphosphate nucleotidohydrolase.